The sequence spans 381 residues: Protein YkfC (381 aa).

The Reverse transcriptase domain occupies 72–337 (LRDELLSGHY…DGFIFLGHRL (266 aa)). Mg(2+)-binding residues include aspartate 166, aspartate 284, and aspartate 285.

This sequence belongs to the bacterial reverse transcriptase family.

The polypeptide is Protein YkfC (ykfC) (Escherichia coli (strain K12)).